The sequence spans 62 residues: Guanine nucleotide-binding protein subunit gamma (62 aa).

Residue C59 is modified to Cysteine methyl ester. C59 carries the S-geranylgeranyl cysteine lipid modification. A propeptide spans 60-62 (removed in mature form); the sequence is SVL.

This sequence belongs to the G protein gamma family. As to quaternary structure, g proteins are composed of 3 units, alpha, beta and gamma. Interacts with gpb-1 and gpb-2.

It localises to the cell membrane. In terms of biological role, guanine nucleotide-binding proteins (G proteins) are involved as a modulator or transducer in various transmembrane signaling systems. The beta and gamma chains are required for the GTPase activity, for replacement of GDP by GTP, and for G protein-effector interaction. The polypeptide is Guanine nucleotide-binding protein subunit gamma (gpc-1) (Caenorhabditis briggsae).